The following is a 448-amino-acid chain: Tubulin beta-1 chain (448 aa).

The GTP site is built by Q11, E69, S138, G142, T143, G144, N204, and N226. E69 is a binding site for Mg(2+). Residues 428-448 form a disordered region; sequence AGIGDDEEEDEEGVMGEEIDA. A compositionally biased stretch (acidic residues) spans 430–448; that stretch reads IGDDEEEDEEGVMGEEIDA.

The protein belongs to the tubulin family. Dimer of alpha and beta chains. A typical microtubule is a hollow water-filled tube with an outer diameter of 25 nm and an inner diameter of 15 nM. Alpha-beta heterodimers associate head-to-tail to form protofilaments running lengthwise along the microtubule wall with the beta-tubulin subunit facing the microtubule plus end conferring a structural polarity. Microtubules usually have 13 protofilaments but different protofilament numbers can be found in some organisms and specialized cells. Mg(2+) is required as a cofactor.

It localises to the cytoplasm. Its subcellular location is the cytoskeleton. Tubulin is the major constituent of microtubules, a cylinder consisting of laterally associated linear protofilaments composed of alpha- and beta-tubulin heterodimers. Microtubules grow by the addition of GTP-tubulin dimers to the microtubule end, where a stabilizing cap forms. Below the cap, tubulin dimers are in GDP-bound state, owing to GTPase activity of alpha-tubulin. This chain is Tubulin beta-1 chain (TUB-1), found in Echinococcus multilocularis (Fox tapeworm).